Consider the following 96-residue polypeptide: UPF0235 protein YggU (96 aa).

Belongs to the UPF0235 family.

In Escherichia coli (strain K12 / MC4100 / BW2952), this protein is UPF0235 protein YggU.